A 494-amino-acid polypeptide reads, in one-letter code: Alpha-amylase-related protein (494 aa).

A signal peptide spans methionine 1–alanine 20. Glutamine 21 is modified (pyrrolidone carboxylic acid). Residues cysteine 48 and cysteine 104 are joined by a disulfide bond. Ca(2+) is bound by residues asparagine 118, glutamine 169, and aspartate 178. Residues cysteine 157 and cysteine 171 are joined by a disulfide bond. Chloride is bound at residue arginine 206. The active-site Nucleophile is aspartate 208. Position 212 (histidine 212) interacts with Ca(2+). Glutamate 245 (proton donor) is an active-site residue. Chloride-binding residues include asparagine 308 and arginine 343. 3 disulfide bridges follow: cysteine 376–cysteine 382, cysteine 418–cysteine 441, and cysteine 448–cysteine 460.

This sequence belongs to the glycosyl hydrolase 13 family. Monomer. Requires Ca(2+) as cofactor. Chloride is required as a cofactor.

It is found in the secreted. The enzyme catalyses Endohydrolysis of (1-&gt;4)-alpha-D-glucosidic linkages in polysaccharides containing three or more (1-&gt;4)-alpha-linked D-glucose units.. This is Alpha-amylase-related protein (Amyrel) from Drosophila ercepeae (Fruit fly).